We begin with the raw amino-acid sequence, 79 residues long: MARIGVENSLTDVQQALQQQGHEVVSLNSENDAHGCDCCVVTGQDSNMMGIADTSIKGSVIKAHGLTTDEICQQVENRT.

The protein belongs to the UPF0180 family.

The sequence is that of UPF0180 protein BcerKBAB4_1316 from Bacillus mycoides (strain KBAB4) (Bacillus weihenstephanensis).